The chain runs to 355 residues: Anthocyanin synthase (355 aa).

2 residues coordinate substrate: Tyr145 and Lys216. Residues 211 to 310 enclose the Fe2OG dioxygenase domain; sequence LLLQMKINYY…RISWAVFCEP (100 aa). 218-220 lines the 2-oxoglutarate pocket; sequence NYY. His235 provides a ligand contact to Fe cation. Residue Thr236 coordinates substrate. 2 residues coordinate Fe cation: Asp237 and His291. 2-oxoglutarate-binding positions include Arg301 and 301-303; that span reads RIS. Substrate is bound by residues Glu309 and Lys344.

It belongs to the iron/ascorbate-dependent oxidoreductase family. Requires L-ascorbate as cofactor. Fe(2+) is required as a cofactor. As to expression, expressed in stems and leaves. Expressed at low levels in ovaries.

It carries out the reaction a (2R,3S,4S)-leucoanthocyanidin + 2-oxoglutarate + O2 = a 4-H-anthocyanidin with a 3-hydroxy group + succinate + CO2 + 2 H2O. It participates in pigment biosynthesis; anthocyanin biosynthesis. Its function is as follows. Involved in anthocyanin biosynthesis by catalyzing the oxidation of leucoanthocyanidins into anthocyanidins. Required for the accumulation of anthocyanin in red-fleshed kiwifruit varieties. This chain is Anthocyanin synthase, found in Actinidia chinensis var. chinensis (Chinese soft-hair kiwi).